We begin with the raw amino-acid sequence, 189 residues long: Ras-like protein rasC (189 aa).

11-18 (GDGGVGKS) serves as a coordination point for GTP. Residues 33–41 (YDPTIENSY) carry the Effector region motif. GTP is bound by residues 58–62 (DTAGQ) and 117–120 (NKAD). C186 is modified (cysteine methyl ester). C186 is lipidated: S-geranylgeranyl cysteine. The propeptide at 187–189 (IIL) is removed in mature form.

Belongs to the small GTPase superfamily. Ras family.

It is found in the cell membrane. The catalysed reaction is GTP + H2O = GDP + phosphate + H(+). Its activity is regulated as follows. Alternates between an inactive form bound to GDP and an active form bound to GTP. Activated by a guanine nucleotide-exchange factor (GEF) and inactivated by a GTPase-activating protein (GAP). Ras proteins bind GDP/GTP and possess intrinsic GTPase activity. This is Ras-like protein rasC (rasC) from Dictyostelium discoideum (Social amoeba).